A 639-amino-acid chain; its full sequence is Chaperone protein HtpG (639 aa).

Positions 1 to 348 (MAQYEFQTEV…SEDLPLNVSR (348 aa)) are a; substrate-binding. The segment at 349-565 (EILQQNRVLA…ENDPTVQMER (217 aa)) is b. Positions 566-639 (LMRATGQTHK…KRVNRLLARG (74 aa)) are c.

Belongs to the heat shock protein 90 family. As to quaternary structure, homodimer.

It localises to the cytoplasm. Functionally, molecular chaperone. Has ATPase activity. This chain is Chaperone protein HtpG, found in Treponema pallidum (strain Nichols).